A 279-amino-acid polypeptide reads, in one-letter code: 2-dehydro-3-deoxyphosphooctonate aldolase (279 aa).

Belongs to the KdsA family.

The protein resides in the cytoplasm. The enzyme catalyses D-arabinose 5-phosphate + phosphoenolpyruvate + H2O = 3-deoxy-alpha-D-manno-2-octulosonate-8-phosphate + phosphate. The protein operates within carbohydrate biosynthesis; 3-deoxy-D-manno-octulosonate biosynthesis; 3-deoxy-D-manno-octulosonate from D-ribulose 5-phosphate: step 2/3. Its pathway is bacterial outer membrane biogenesis; lipopolysaccharide biosynthesis. This Azoarcus sp. (strain BH72) protein is 2-dehydro-3-deoxyphosphooctonate aldolase.